Consider the following 456-residue polypeptide: Serine/threonine-protein kinase PBS1 (456 aa).

The disordered stretch occupies residues 1–57 (MGCFSCFDSSDDEKLNPVDESNHGQKKQSQPTVSNNISGLPSGGEKLSSKTNGGSKR). Residue glycine 2 is the site of N-myristoyl glycine attachment. S-palmitoyl cysteine attachment occurs at residues cysteine 3 and cysteine 6. The span at 12–23 (DEKLNPVDESNH) shows a compositional bias: basic and acidic residues. Serine 21 is modified (phosphoserine). The span at 27–39 (KQSQPTVSNNISG) shows a compositional bias: polar residues. In terms of domain architecture, Protein kinase spans 86–363 (FHPDTFLGEG…ADVVTALSYL (278 aa)). ATP-binding positions include 92-100 (LGEGGFGRV) and lysine 115. The residue at position 160 (tyrosine 160) is a Phosphotyrosine. Aspartate 213 serves as the catalytic Proton acceptor. Serine 217 and serine 247 each carry phosphoserine. 2 positions are modified to phosphothreonine: threonine 248 and threonine 253. Tyrosine 261 carries the post-translational modification Phosphotyrosine. The short motif at 292–296 (SEMPH) is the Recognition motif required for RPS5-mediated plant resistance to P.syringae element. The tract at residues 368–456 (YDPSKDDSRR…QGTSESNSTG (89 aa)) is disordered. Composition is skewed to basic and acidic residues over residues 370–392 (PSKD…RNDD) and 400–429 (FDLE…RAVA). Positions 446–456 (EQGTSESNSTG) are enriched in polar residues.

This sequence belongs to the protein kinase superfamily. Ser/Thr protein kinase family. In infected plant cells, it interacts with the P.syringae virulence protein avrPphB. In uninfected plants, autophosphorylated form interacts with RPS5. Interacts with FLS2. In terms of processing, cleaved by avrPphB in infected plant cells. Its cleavage serves as a signal that triggers the RPS5-mediated defense system. Post-translationally, autophosphorylates. Autophosphorylation may be required to trigger the RPS5-mediated plant defense system. Palmitoylation at Cys-3 and Cys-6 are required for plasma membrane location that is essential for the RPS5-mediated plant defense response.

It is found in the cell membrane. The enzyme catalyses L-seryl-[protein] + ATP = O-phospho-L-seryl-[protein] + ADP + H(+). It catalyses the reaction L-threonyl-[protein] + ATP = O-phospho-L-threonyl-[protein] + ADP + H(+). Functionally, protein kinase required for plant defense mechanism mediated by the disease resistance (R) protein RPS5. In case of infection by Pseudomonas syringae, AvrPphB triggers RPS5-mediated defense mechanism via the cleavage of PBS1. Both kinase activity and cleavage by avrPphB are independently required to trigger the RPS5-mediated resistance. Contributes to PAMP-triggered immunity (PTI) signaling and defense responses downstream of FLS2. The polypeptide is Serine/threonine-protein kinase PBS1 (Arabidopsis thaliana (Mouse-ear cress)).